A 341-amino-acid chain; its full sequence is tRNA N6-adenosine threonylcarbamoyltransferase (341 aa).

The Fe cation site is built by histidine 113 and histidine 117. Residues 141 to 145 (LVSGG), aspartate 174, glycine 187, and asparagine 282 contribute to the substrate site. Aspartate 310 contacts Fe cation.

The protein belongs to the KAE1 / TsaD family. Fe(2+) serves as cofactor.

It is found in the cytoplasm. The catalysed reaction is L-threonylcarbamoyladenylate + adenosine(37) in tRNA = N(6)-L-threonylcarbamoyladenosine(37) in tRNA + AMP + H(+). Functionally, required for the formation of a threonylcarbamoyl group on adenosine at position 37 (t(6)A37) in tRNAs that read codons beginning with adenine. Is involved in the transfer of the threonylcarbamoyl moiety of threonylcarbamoyl-AMP (TC-AMP) to the N6 group of A37, together with TsaE and TsaB. TsaD likely plays a direct catalytic role in this reaction. This Porphyromonas gingivalis (strain ATCC BAA-308 / W83) protein is tRNA N6-adenosine threonylcarbamoyltransferase.